Consider the following 214-residue polypeptide: ATP phosphoribosyltransferase (214 aa).

This sequence belongs to the ATP phosphoribosyltransferase family. Short subfamily. In terms of assembly, heteromultimer composed of HisG and HisZ subunits.

It is found in the cytoplasm. The enzyme catalyses 1-(5-phospho-beta-D-ribosyl)-ATP + diphosphate = 5-phospho-alpha-D-ribose 1-diphosphate + ATP. It participates in amino-acid biosynthesis; L-histidine biosynthesis; L-histidine from 5-phospho-alpha-D-ribose 1-diphosphate: step 1/9. Functionally, catalyzes the condensation of ATP and 5-phosphoribose 1-diphosphate to form N'-(5'-phosphoribosyl)-ATP (PR-ATP). Has a crucial role in the pathway because the rate of histidine biosynthesis seems to be controlled primarily by regulation of HisG enzymatic activity. This chain is ATP phosphoribosyltransferase (hisG), found in Nostoc sp. (strain PCC 7120 / SAG 25.82 / UTEX 2576).